The chain runs to 652 residues: DNA ligase (652 aa).

NAD(+)-binding positions include 29 to 33 (DSEYD), 78 to 79 (SL), and E107. The N6-AMP-lysine intermediate role is filled by K109. Residues R130, E164, K278, and K302 each coordinate NAD(+). Zn(2+) is bound by residues C395, C398, C413, and C418. Residues 577-652 (VADAALSGLT…VRDEAWLESL (76 aa)) form the BRCT domain.

It belongs to the NAD-dependent DNA ligase family. LigA subfamily. It depends on Mg(2+) as a cofactor. Requires Mn(2+) as cofactor.

The enzyme catalyses NAD(+) + (deoxyribonucleotide)n-3'-hydroxyl + 5'-phospho-(deoxyribonucleotide)m = (deoxyribonucleotide)n+m + AMP + beta-nicotinamide D-nucleotide.. In terms of biological role, DNA ligase that catalyzes the formation of phosphodiester linkages between 5'-phosphoryl and 3'-hydroxyl groups in double-stranded DNA using NAD as a coenzyme and as the energy source for the reaction. It is essential for DNA replication and repair of damaged DNA. This Streptococcus pneumoniae (strain 70585) protein is DNA ligase.